A 904-amino-acid polypeptide reads, in one-letter code: Shieldin complex subunit 2 (904 aa).

A sufficient for interaction with SHLD3 and MAD2L2 region spans residues 1–60 (MSGGSQVHIFWGAPVAPLKMTVSQDTASLMSVADPWKKIHLLYSQHSLYLKDEKQHKNLE). The segment at 1 to 568 (MSGGSQVHIF…AYVSSKHSYL (568 aa)) is interaction with ASTE1. The interval 721–891 (KCSGVVLIQA…LQQDFSLLDF (171 aa)) is mediates interaction with SHLD1.

The protein belongs to the SHLD2 family. In terms of assembly, component of the shieldin complex, consisting of SHLD1, SHLD2, SHLD3 and MAD2L2/REV7. Within the complex, SHLD2 forms a scaffold which interacts with a SHLD3-MAD2L2 subcomplex via its N-terminus, and with SHLD1 via its C-terminus. Interacts with TP53BP1. Interacts with RIF1. Interacts with ASTE1.

The protein localises to the chromosome. Its function is as follows. Component of the shieldin complex, which plays an important role in repair of DNA double-stranded breaks (DSBs). During G1 and S phase of the cell cycle, the complex functions downstream of TP53BP1 to promote non-homologous end joining (NHEJ) and suppress DNA end resection. Mediates various NHEJ-dependent processes including immunoglobulin class-switch recombination, and fusion of unprotected telomeres. This Pongo abelii (Sumatran orangutan) protein is Shieldin complex subunit 2.